The primary structure comprises 261 residues: 5'-nucleotidase SurE (261 aa).

A divalent metal cation contacts are provided by D8, D9, S43, and N96.

Belongs to the SurE nucleotidase family. It depends on a divalent metal cation as a cofactor.

Its subcellular location is the cytoplasm. The catalysed reaction is a ribonucleoside 5'-phosphate + H2O = a ribonucleoside + phosphate. Functionally, nucleotidase that shows phosphatase activity on nucleoside 5'-monophosphates. In Cereibacter sphaeroides (strain ATCC 17023 / DSM 158 / JCM 6121 / CCUG 31486 / LMG 2827 / NBRC 12203 / NCIMB 8253 / ATH 2.4.1.) (Rhodobacter sphaeroides), this protein is 5'-nucleotidase SurE.